The primary structure comprises 314 residues: Pyridoxal 5'-phosphate synthase-like subunit PDX1.2 (314 aa).

A2 is modified (N-acetylalanine).

This sequence belongs to the PdxS/SNZ family. Homodimer or heterodimer with PDX1.1 or PDX1.3. No interaction with PDX2. Expressed in callus tissues, flowers and roots. Weakly expressed in leaves and stems.

The protein localises to the cytoplasm. In terms of biological role, the protein has no function in the formation of pyridoxal 5'-phosphate. This Arabidopsis thaliana (Mouse-ear cress) protein is Pyridoxal 5'-phosphate synthase-like subunit PDX1.2 (PDX12).